A 369-amino-acid polypeptide reads, in one-letter code: 3-dehydroquinate synthase (369 aa).

NAD(+)-binding positions include 75 to 80 (DGEEHK), 109 to 113 (GVIGD), 133 to 134 (TT), K146, K155, and 173 to 176 (TLKT). Zn(2+)-binding residues include E188, H251, and H268.

The protein belongs to the sugar phosphate cyclases superfamily. Dehydroquinate synthase family. It depends on Co(2+) as a cofactor. The cofactor is Zn(2+). NAD(+) serves as cofactor.

It is found in the cytoplasm. It catalyses the reaction 7-phospho-2-dehydro-3-deoxy-D-arabino-heptonate = 3-dehydroquinate + phosphate. It participates in metabolic intermediate biosynthesis; chorismate biosynthesis; chorismate from D-erythrose 4-phosphate and phosphoenolpyruvate: step 2/7. In terms of biological role, catalyzes the conversion of 3-deoxy-D-arabino-heptulosonate 7-phosphate (DAHP) to dehydroquinate (DHQ). This Legionella pneumophila (strain Corby) protein is 3-dehydroquinate synthase.